Here is a 473-residue protein sequence, read N- to C-terminus: Levansucrase (473 aa).

Positions 1–29 (MNIKKFAKQATVLTFTTALLAGGATQAFA) are cleaved as a signal peptide. Sucrose is bound by residues tryptophan 85, aspartate 86, and serine 164. Residue aspartate 86 is the Nucleophile of the active site. Position 241 (aspartate 241) interacts with Ca(2+). Residues arginine 246 and aspartate 247 each coordinate sucrose. Positions 272, 308, 310, and 339 each coordinate Ca(2+). A sucrose-binding site is contributed by glutamate 340. Residue glutamate 342 is the Proton donor/acceptor of the active site. Arginine 360 serves as a coordination point for sucrose.

Belongs to the glycosyl hydrolase 68 family. As to quaternary structure, monomer.

It is found in the secreted. It catalyses the reaction [6)-beta-D-fructofuranosyl-(2-&gt;](n) alpha-D-glucopyranoside + sucrose = [6)-beta-D-fructofuranosyl-(2-&gt;](n+1) alpha-D-glucopyranoside + D-glucose. Its activity is regulated as follows. Ca(2+) may play an important structural role and promote stability of levansucrase. The enzyme concentration is a factor defining the molecular weight (MW) levan distribution. A bimodal distribution is reported at the usual enzyme concentrations. At low concentrations, the enzyme synthesizes high MW levan, and at high concentrations, it synthesizes low MW levan. In terms of biological role, catalyzes the synthesis of levan, a fructose polymer, by transferring the fructosyl moiety from sucrose to a growing acceptor molecule. Also displays sucrose hydrolase activity. At low sucrose concentrations, functions as an hydrolase with water as acceptor, whereas at higher substrate concentrations it adds fructosyl units to a growing levan chain. This is Levansucrase from Bacillus subtilis (strain 168).